A 566-amino-acid polypeptide reads, in one-letter code: Potassium-transporting ATPase potassium-binding subunit (566 aa).

The next 12 membrane-spanning stretches (helical) occupy residues V6–A26, A60–F80, L128–L148, I167–A187, L247–F267, V276–M296, F331–V351, L361–G381, G383–G403, I423–P443, L492–I512, and L530–A550.

Belongs to the KdpA family. In terms of assembly, the system is composed of three essential subunits: KdpA, KdpB and KdpC.

It is found in the cell inner membrane. Its function is as follows. Part of the high-affinity ATP-driven potassium transport (or Kdp) system, which catalyzes the hydrolysis of ATP coupled with the electrogenic transport of potassium into the cytoplasm. This subunit binds the periplasmic potassium ions and delivers the ions to the membrane domain of KdpB through an intramembrane tunnel. This chain is Potassium-transporting ATPase potassium-binding subunit, found in Tolumonas auensis (strain DSM 9187 / NBRC 110442 / TA 4).